Here is an 86-residue protein sequence, read N- to C-terminus: Diphthamide biosynthesis protein 3 (86 aa).

The 57-residue stretch at 4–60 (YHDEVEIEDFEYDEEEEMYYYPCPCGDRFQISKEELIEGEEVATCPSCSLVIKVIYD) folds into the DPH-type MB domain. Cys-26, Cys-28, Cys-48, and Cys-51 together coordinate Fe cation.

Belongs to the DPH3 family. As to quaternary structure, component of the 2-(3-amino-3-carboxypropyl)histidine synthase complex composed of Dph1, Dph2, Dph3 and a NADH-dependent reductase. Fe(2+) serves as cofactor.

The catalysed reaction is [3Fe-4S](1+)-[protein] + Fe(2+)-[Dph3] = [3Fe-4S](0)-[protein] + Fe(3+)-[Dph3]. It carries out the reaction 2 [3Fe-4S](0)-[protein] + 2 Fe(2+)-[Dph3] + NADH = 2 [4Fe-4S](1+)-[protein] + 2 [Dph3] + NAD(+) + H(+). The protein operates within protein modification; peptidyl-diphthamide biosynthesis. Its function is as follows. Required for the first step of diphthamide biosynthesis, a post-translational modification of histidine which occurs in elongation factor 2. Dph1 and Dph2 transfer a 3-amino-3-carboxypropyl (ACP) group from S-adenosyl-L-methionine (SAM) to a histidine residue, the reaction is assisted by a reduction system comprising Dph3 and a NADH-dependent reductase. Acts as an electron donor to reduce the Fe-S cluster in Dph1-Dph2 keeping the [4Fe-4S] clusters in the active and reduced state. Restores iron to Dph1-Dph2 iron-sulfur clusters which have degraded from [4Fe-4S] to [3Fe-4S] by donating an iron atom to reform [4Fe-4S] clusters, in a manner dependent on the presence of elongation factor 2 and SAM. Associates with the elongator complex and is required for tRNA Wobble base modifications mediated by the elongator complex. The elongator complex is required for multiple tRNA modifications, including mcm5U (5-methoxycarbonylmethyl uridine), mcm5s 2U (5-methoxycarbonylmethyl-2-thiouridine), and ncm5U (5-carbamoylmethyl uridine). The chain is Diphthamide biosynthesis protein 3 from Drosophila melanogaster (Fruit fly).